Consider the following 666-residue polypeptide: MTSSSLFREGELGHFCLNKQEMLHLNVTNPNSIYIEGKLSFEGYKSFNIHCYVDTGASLCIASRYIIPEELWENSPKDIQVKIANQELIKITKVCKNLKVKFAGKSFEIPTVYQQETGIDFLIGNNFCRLYNPFIQWEDRIAFHLKNEMVLIKKVTKAFSVSNPSFLENMKKDSKTEQIPGTNISKNIINPEERYFLITEKYQKIEQLLDKVCSENPIDPIKSKQWMKASIKLIDPLKVIRVKPMSYSPQDREGFAKQIKELLDLGLIIPSKSQHMSPAFLVENEAERRRGKKRMVVNYKAINQATIGDSHNLPNMQELLTLLRGKSIFSSFDCKSGFWQVVLDEESQKLTAFTCPQGHFQWKVVPFGLKQAPSIFQRHMQTALNGADKFCMVYVDDIIVFSNSELDHYNHVYAVLKIVEKYGIILSKKKANLFKEKINFLGLEIDKGTHCPQNHILENIHKFPDRLEDKKHLQRFLGVLTYAETYIPKLAEIRKPLQVKLKKDVTWNWTQSDSDYVKKIKKNLGSFPKLYLPKPEDHLIIETDASDSFWGGVLKARALDGVELICRYSSGSFKQAEKNYHSNDKELLAVKQVITKFSAYLTPVRFTVRTDNKNFTYFLRINLKGDSKQGRLVRWQNWFSKYQFDVEHLEGVKNVLADCLTRDFNA.

Asp54 is an active-site residue. Residues 215-445 (ENPIDPIKSK…EKINFLGLEI (231 aa)) enclose the Reverse transcriptase domain.

The protein belongs to the caulimoviridae enzymatic polyprotein family.

It catalyses the reaction DNA(n) + a 2'-deoxyribonucleoside 5'-triphosphate = DNA(n+1) + diphosphate. Its function is as follows. Encodes for at least two polypeptides: protease (PR) and reverse transcriptase (RT). The protease processes the polyprotein in cis. Reverse transcriptase is multifunctional enzyme that converts the viral RNA genome into dsDNA in viral cytoplasmic capsids. This enzyme displays a DNA polymerase activity that can copy either DNA or RNA templates, and a ribonuclease H (RNase H) activity that cleaves the RNA strand of RNA-DNA heteroduplexes in a partially processive 3'- to 5'-endonucleasic mode. Neo-synthesized pregenomic RNA (pgRNA) are encapsidated, and reverse-transcribed inside the nucleocapsid. Partial (+)DNA is synthesized from the (-)DNA template and generates the relaxed circular DNA (RC-DNA) genome. After budding and infection, the RC-DNA migrates in the nucleus, and is converted into a plasmid-like covalently closed circular DNA (cccDNA). The chain is Enzymatic polyprotein from Figwort mosaic virus (strain DxS) (FMV).